Reading from the N-terminus, the 739-residue chain is Catalase-peroxidase (739 aa).

A cross-link (tryptophyl-tyrosyl-methioninium (Trp-Tyr) (with M-253)) is located at residues 99–227 (WHSAGTYRMG…LAAVQMGLIY (129 aa)). The active-site Proton acceptor is His100. The tryptophyl-tyrosyl-methioninium (Tyr-Met) (with W-99) cross-link spans 227 to 253 (YVNPEGPDGNPDPVASGRDVRETFARM). His268 provides a ligand contact to heme b.

Belongs to the peroxidase family. Peroxidase/catalase subfamily. Homodimer or homotetramer. Requires heme b as cofactor. In terms of processing, formation of the three residue Trp-Tyr-Met cross-link is important for the catalase, but not the peroxidase activity of the enzyme.

The catalysed reaction is H2O2 + AH2 = A + 2 H2O. It carries out the reaction 2 H2O2 = O2 + 2 H2O. Bifunctional enzyme with both catalase and broad-spectrum peroxidase activity. This Syntrophotalea carbinolica (strain DSM 2380 / NBRC 103641 / GraBd1) (Pelobacter carbinolicus) protein is Catalase-peroxidase.